The sequence spans 431 residues: 3-phosphoshikimate 1-carboxyvinyltransferase (431 aa).

3-phosphoshikimate contacts are provided by Lys-22, Ser-23, and Arg-27. Position 22 (Lys-22) interacts with phosphoenolpyruvate. The phosphoenolpyruvate site is built by Gly-94 and Arg-122. 3-phosphoshikimate is bound by residues Ser-167, Gln-169, Asp-315, and Lys-342. Position 169 (Gln-169) interacts with phosphoenolpyruvate. Asp-315 serves as the catalytic Proton acceptor. Phosphoenolpyruvate contacts are provided by Arg-346 and Arg-388.

This sequence belongs to the EPSP synthase family. As to quaternary structure, monomer.

Its subcellular location is the cytoplasm. The catalysed reaction is 3-phosphoshikimate + phosphoenolpyruvate = 5-O-(1-carboxyvinyl)-3-phosphoshikimate + phosphate. Its pathway is metabolic intermediate biosynthesis; chorismate biosynthesis; chorismate from D-erythrose 4-phosphate and phosphoenolpyruvate: step 6/7. Functionally, catalyzes the transfer of the enolpyruvyl moiety of phosphoenolpyruvate (PEP) to the 5-hydroxyl of shikimate-3-phosphate (S3P) to produce enolpyruvyl shikimate-3-phosphate and inorganic phosphate. This is 3-phosphoshikimate 1-carboxyvinyltransferase from Pelobacter propionicus (strain DSM 2379 / NBRC 103807 / OttBd1).